The primary structure comprises 261 residues: Acyl-[acyl-carrier-protein]--UDP-N-acetylglucosamine O-acyltransferase (261 aa).

The protein belongs to the transferase hexapeptide repeat family. LpxA subfamily. In terms of assembly, homotrimer.

It localises to the cytoplasm. It carries out the reaction a (3R)-hydroxyacyl-[ACP] + UDP-N-acetyl-alpha-D-glucosamine = a UDP-3-O-[(3R)-3-hydroxyacyl]-N-acetyl-alpha-D-glucosamine + holo-[ACP]. It participates in glycolipid biosynthesis; lipid IV(A) biosynthesis; lipid IV(A) from (3R)-3-hydroxytetradecanoyl-[acyl-carrier-protein] and UDP-N-acetyl-alpha-D-glucosamine: step 1/6. Its function is as follows. Involved in the biosynthesis of lipid A, a phosphorylated glycolipid that anchors the lipopolysaccharide to the outer membrane of the cell. The polypeptide is Acyl-[acyl-carrier-protein]--UDP-N-acetylglucosamine O-acyltransferase (Paracoccus denitrificans (strain Pd 1222)).